A 236-amino-acid polypeptide reads, in one-letter code: tRNA (guanine-N(7)-)-methyltransferase (236 aa).

Residues D35, E60, N87, and D113 each contribute to the S-adenosyl-L-methionine site. The active site involves D113. Substrate contacts are provided by K117 and D149.

The protein belongs to the class I-like SAM-binding methyltransferase superfamily. TrmB family.

The enzyme catalyses guanosine(46) in tRNA + S-adenosyl-L-methionine = N(7)-methylguanosine(46) in tRNA + S-adenosyl-L-homocysteine. Its pathway is tRNA modification; N(7)-methylguanine-tRNA biosynthesis. Catalyzes the formation of N(7)-methylguanine at position 46 (m7G46) in tRNA. This is tRNA (guanine-N(7)-)-methyltransferase from Prochlorococcus marinus (strain MIT 9303).